The sequence spans 265 residues: Pancreas transcription factor 1 subunit alpha (265 aa).

The 53-residue stretch at 115–167 (QLRQAANVRERRRMQSINDAFEGLRSHIPTLPYEKRLSKVDTLRLAIGYINFL) folds into the bHLH domain.

The protein resides in the nucleus. In terms of biological role, transcription factor implicated in the cell fate determination in various organs. Binds to the E-box consensus sequence 5'-CANNTG-3'. Required for exocrine pancreatic development. Plays a central role in directing the differentiation of retinal progenitors towards horizontal and amacrine fates. The protein is Pancreas transcription factor 1 subunit alpha (ptf1a) of Danio rerio (Zebrafish).